The following is a 446-amino-acid chain: Probable D-serine dehydratase (446 aa).

At Lys-116 the chain carries N6-(pyridoxal phosphate)lysine.

Belongs to the serine/threonine dehydratase family. DsdA subfamily. Requires pyridoxal 5'-phosphate as cofactor.

It carries out the reaction D-serine = pyruvate + NH4(+). This chain is Probable D-serine dehydratase, found in Bacillus thuringiensis (strain Al Hakam).